Here is a 271-residue protein sequence, read N- to C-terminus: Putative cysteine protease YopT-like blr2140 (271 aa).

The disordered stretch occupies residues 1–81; that stretch reads MYDRIGGSST…STSSPESPAT (81 aa). Residues 7 to 29 are compositionally biased toward polar residues; the sequence is GSSTRTSQTDEPSQSVDSGSFTE. Residues 65–81 are compositionally biased toward low complexity; that stretch reads TSSASEPSTSSPESPAT. Cys-100 is a catalytic residue. A disordered region spans residues 114–136; sequence SPSTRMSALTPGSQTHASAAERQ. Catalysis depends on residues His-213 and Asp-228.

The protein belongs to the peptidase C58 family.

In terms of biological role, potential cysteine protease, which may play a central role after invasion of host cell. The sequence is that of Putative cysteine protease YopT-like blr2140 from Bradyrhizobium diazoefficiens (strain JCM 10833 / BCRC 13528 / IAM 13628 / NBRC 14792 / USDA 110).